The primary structure comprises 581 residues: Phosphoinositide phospholipase C 2 (581 aa).

The 77-residue stretch at 26–102 (EIKTIFEKYS…NPPLALHKVH (77 aa)) folds into the EF-hand-like domain. A PI-PLC X-box domain is found at 103-248 (HDMDAPISHY…LKRRIIISTK (146 aa)). Active-site residues include His118 and His164. The segment at 279-314 (PSFIQRNKSEAKDDLDGNDDDDDDDDEDKSKINAPP) is disordered. Residues 294–305 (DGNDDDDDDDDE) show a composition bias toward acidic residues. The 117-residue stretch at 317–433 (KHLIAIHAGK…GYIKKPDLLL (117 aa)) folds into the PI-PLC Y-box domain. The region spanning 434-563 (KSGSDSDIFD…EGIRAFPLHS (130 aa)) is the C2 domain.

Ca(2+) serves as cofactor. Post-translationally, phosphorylation level varies significantly during early response to bacterial elicitor. In terms of tissue distribution, expressed in roots, shoots, leaves and flowers.

It is found in the cell membrane. The catalysed reaction is a 1,2-diacyl-sn-glycero-3-phospho-(1D-myo-inositol-4,5-bisphosphate) + H2O = 1D-myo-inositol 1,4,5-trisphosphate + a 1,2-diacyl-sn-glycerol + H(+). Functionally, the production of the second messenger molecules diacylglycerol (DAG) and inositol 1,4,5-trisphosphate (IP3) is mediated by activated phosphatidylinositol-specific phospholipase C enzymes. At physiological calcium concentration, the preferred substrate is phosphatidylinositol 4,5-bisphosphate versus phosphatidylinositol. The protein is Phosphoinositide phospholipase C 2 (PLC2) of Arabidopsis thaliana (Mouse-ear cress).